Reading from the N-terminus, the 305-residue chain is Methionyl-tRNA formyltransferase (305 aa).

110–113 (SLLP) provides a ligand contact to (6S)-5,6,7,8-tetrahydrofolate.

It belongs to the Fmt family.

It carries out the reaction L-methionyl-tRNA(fMet) + (6R)-10-formyltetrahydrofolate = N-formyl-L-methionyl-tRNA(fMet) + (6S)-5,6,7,8-tetrahydrofolate + H(+). Functionally, attaches a formyl group to the free amino group of methionyl-tRNA(fMet). The formyl group appears to play a dual role in the initiator identity of N-formylmethionyl-tRNA by promoting its recognition by IF2 and preventing the misappropriation of this tRNA by the elongation apparatus. In Ureaplasma parvum serovar 3 (strain ATCC 700970), this protein is Methionyl-tRNA formyltransferase.